A 475-amino-acid chain; its full sequence is Citrate synthase, mitochondrial (475 aa).

Catalysis depends on residues H310, H356, and D411.

The protein belongs to the citrate synthase family.

The protein resides in the mitochondrion matrix. The catalysed reaction is oxaloacetate + acetyl-CoA + H2O = citrate + CoA + H(+). The protein operates within carbohydrate metabolism; tricarboxylic acid cycle; isocitrate from oxaloacetate: step 1/2. The polypeptide is Citrate synthase, mitochondrial (cit-1) (Aspergillus niger).